A 146-amino-acid chain; its full sequence is Inclusion membrane protein D (146 aa).

Transmembrane regions (helical) follow at residues 38–58 (AAVA…GLLF) and 68–88 (VVAA…ALVG).

The protein localises to the secreted. Its subcellular location is the host vacuole. It localises to the host pathogen-containing vacuole. The protein resides in the host pathogen-containing vacuole membrane. Functionally, host inclusion membrane protein probably involved in early modification events of the chlamydial inclusion. The polypeptide is Inclusion membrane protein D (Chlamydia trachomatis serovar L2 (strain ATCC VR-902B / DSM 19102 / 434/Bu)).